Consider the following 497-residue polypeptide: Glycerol kinase (497 aa).

Thr13 serves as a coordination point for ADP. ATP is bound by residues Thr13, Thr14, and Ser15. A sn-glycerol 3-phosphate-binding site is contributed by Thr13. Arg17 contributes to the ADP binding site. Arg83, Glu84, and Tyr135 together coordinate sn-glycerol 3-phosphate. Residues Arg83, Glu84, and Tyr135 each coordinate glycerol. Phosphohistidine; by HPr is present on His231. Asp245 is a binding site for sn-glycerol 3-phosphate. Residues Asp245 and Gln246 each coordinate glycerol. ADP contacts are provided by Thr267 and Gly310. The ATP site is built by Thr267, Gly310, Gln314, and Gly411. Residues Gly411 and Asn415 each contribute to the ADP site.

The protein belongs to the FGGY kinase family. As to quaternary structure, homotetramer and homodimer (in equilibrium). In terms of processing, the phosphoenolpyruvate-dependent sugar phosphotransferase system (PTS), including enzyme I, and histidine-containing protein (HPr) are required for the phosphorylation, which leads to the activation of the enzyme.

The catalysed reaction is glycerol + ATP = sn-glycerol 3-phosphate + ADP + H(+). Its pathway is polyol metabolism; glycerol degradation via glycerol kinase pathway; sn-glycerol 3-phosphate from glycerol: step 1/1. With respect to regulation, activated by phosphorylation and inhibited by fructose 1,6-bisphosphate (FBP). In terms of biological role, key enzyme in the regulation of glycerol uptake and metabolism. Catalyzes the phosphorylation of glycerol to yield sn-glycerol 3-phosphate. The sequence is that of Glycerol kinase from Listeria innocua serovar 6a (strain ATCC BAA-680 / CLIP 11262).